Reading from the N-terminus, the 264-residue chain is Acetyl-coenzyme A carboxylase carboxyl transferase subunit beta (264 aa).

Residues 4-264 (LWVKCKQCQQ…CGNSLEGVES (261 aa)) form the CoA carboxyltransferase N-terminal domain. Zn(2+)-binding residues include Cys8, Cys11, Cys27, and Cys29. The C4-type zinc-finger motif lies at 8-29 (CKQCQQILLTKELEKNLKVCRC).

Belongs to the AccD/PCCB family. Acetyl-CoA carboxylase is a heterohexamer composed of biotin carboxyl carrier protein (AccB), biotin carboxylase (AccC) and two subunits each of ACCase subunit alpha (AccA) and ACCase subunit beta (AccD). Zn(2+) is required as a cofactor.

The protein resides in the cytoplasm. It carries out the reaction N(6)-carboxybiotinyl-L-lysyl-[protein] + acetyl-CoA = N(6)-biotinyl-L-lysyl-[protein] + malonyl-CoA. It functions in the pathway lipid metabolism; malonyl-CoA biosynthesis; malonyl-CoA from acetyl-CoA: step 1/1. In terms of biological role, component of the acetyl coenzyme A carboxylase (ACC) complex. Biotin carboxylase (BC) catalyzes the carboxylation of biotin on its carrier protein (BCCP) and then the CO(2) group is transferred by the transcarboxylase to acetyl-CoA to form malonyl-CoA. This is Acetyl-coenzyme A carboxylase carboxyl transferase subunit beta from Heliobacterium modesticaldum (strain ATCC 51547 / Ice1).